Here is a 224-residue protein sequence, read N- to C-terminus: Peroxiredoxin-6 (224 aa).

A Thioredoxin domain is found at 5-169 (LLLGDEAPNF…ILRVIISLQL (165 aa)). A required and sufficient for targeting to lysosomes and lamellar bodies region spans residues 31–40 (DSWGILFSHP). Position 44 is a phosphothreonine (T44). C47 serves as the catalytic Cysteine sulfenic acid (-SOH) intermediate; for peroxidase activity. K63 is subject to N6-acetyllysine. Y89 is subject to Phosphotyrosine. D140 functions as the For phospholipase activity in the catalytic mechanism. Position 177 is a phosphothreonine; by MAPK (T177). An N6-acetyllysine; alternate modification is found at K209. K209 is modified (N6-succinyllysine; alternate).

It belongs to the peroxiredoxin family. Prx6 subfamily. Homodimer. Interacts with GSTP1; mediates PRDX6 glutathionylation and regeneration. Interacts with APEX1. Interacts with STH. May interact with FAM168B. May interact with HTR2A. In terms of processing, irreversibly inactivated by overoxidation of Cys-47 to sulfinic acid (Cys-SO(2)H) and sulfonic acid (Cys-SO(3)H) forms upon oxidative stress. Phosphorylation at Thr-177 by MAP kinases increases the phospholipase activity of the enzyme. The phosphorylated form exhibits a greater lysophosphatidylcholine acyltransferase activity compared to the non-phosphorylated form.

It localises to the cytoplasm. It is found in the lysosome. The enzyme catalyses a hydroperoxide + 2 glutathione = an alcohol + glutathione disulfide + H2O. It catalyses the reaction a 1,2-diacyl-sn-glycero-3-phosphocholine + H2O = a 1-acyl-sn-glycero-3-phosphocholine + a fatty acid + H(+). It carries out the reaction a 1-acyl-sn-glycero-3-phosphocholine + an acyl-CoA = a 1,2-diacyl-sn-glycero-3-phosphocholine + CoA. The catalysed reaction is 1-hexadecanoyl-sn-glycero-3-phosphocholine + hexadecanoyl-CoA = 1,2-dihexadecanoyl-sn-glycero-3-phosphocholine + CoA. The enzyme catalyses 1,2-dihexadecanoyl-sn-glycero-3-phosphocholine + H2O = 1-hexadecanoyl-sn-glycero-3-phosphocholine + hexadecanoate + H(+). Thiol-specific peroxidase that catalyzes the reduction of hydrogen peroxide and organic hydroperoxides to water and alcohols, respectively. Can reduce H(2)O(2) and short chain organic, fatty acid, and phospholipid hydroperoxides. Also has phospholipase activity, and can therefore either reduce the oxidized sn-2 fatty acyl group of phospholipids (peroxidase activity) or hydrolyze the sn-2 ester bond of phospholipids (phospholipase activity). These activities are dependent on binding to phospholipids at acidic pH and to oxidized phospholipds at cytosolic pH. Plays a role in cell protection against oxidative stress by detoxifying peroxides and in phospholipid homeostasis. Exhibits acyl-CoA-dependent lysophospholipid acyltransferase which mediates the conversion of lysophosphatidylcholine (1-acyl-sn-glycero-3-phosphocholine or LPC) into phosphatidylcholine (1,2-diacyl-sn-glycero-3-phosphocholine or PC). Shows a clear preference for LPC as the lysophospholipid and for palmitoyl CoA as the fatty acyl substrate. This is Peroxiredoxin-6 (PRDX6) from Sus scrofa (Pig).